Here is an 813-residue protein sequence, read N- to C-terminus: Protein tramtrack, alpha isoform (813 aa).

Residues T33–Q98 form the BTB domain. Disordered stretches follow at residues E118–Q148, A171–E324, T356–K428, and A526–Q585. Over residues S125–P145 the composition is skewed to low complexity. The segment covering T176–S187 has biased composition (polar residues). Over residues P192–K201 the composition is skewed to basic residues. Phosphoserine occurs at positions 203, 205, and 206. T209 carries the phosphothreonine modification. The span at H254–N285 shows a compositional bias: basic and acidic residues. Composition is skewed to polar residues over residues L302–E324, T356–K369, and A377–K388. The segment covering S560 to A578 has biased composition (basic residues). 2 consecutive C2H2-type zinc fingers follow at residues Y610–H638 and F646–H669. The residue at position 682 (S682) is a Phosphoserine.

As to quaternary structure, interacts with CoRest/CG33525, suggesting that it acts by recruiting a CoRest-containing corepressor complex. Interacts with phyl.

Its subcellular location is the nucleus. Its function is as follows. Binds to a number of sites in the transcriptional regulatory region of ftz. Isoform alpha is required to repress genes that promote the R7 cell fate. Probable repressor of the transcription of the segmentation genes ftz, eve, h, odd, run, and en. May bind to the region 5'-AGGG[CT]GG-3'. Degradation of ttk is directed by binding of sinah or sina, via the adapter molecule phyl which binds to the BTB domain of ttk. This chain is Protein tramtrack, alpha isoform (ttk), found in Drosophila melanogaster (Fruit fly).